The following is a 110-amino-acid chain: U1-lycotoxin-Ls1kk (110 aa).

Positions 1-20 are cleaved as a signal peptide; it reads MKFVLLFGVFLVTLFSYSSA. The propeptide occupies 21 to 44; that stretch reads EMLDDFDQADEDELLSLIEKEEAR. 4 disulfide bridges follow: cysteine 47–cysteine 62, cysteine 54–cysteine 71, cysteine 61–cysteine 89, and cysteine 73–cysteine 87.

This sequence belongs to the neurotoxin 19 (CSTX) family. 03 subfamily. Expressed by the venom gland.

The protein localises to the secreted. The chain is U1-lycotoxin-Ls1kk from Lycosa singoriensis (Wolf spider).